A 288-amino-acid polypeptide reads, in one-letter code: ATP synthase subunit a (288 aa).

Helical transmembrane passes span 47–67, 104–124, 157–177, 199–219, 237–257, and 258–278; these read LDSM…FWLV, LIAP…LMDL, DPNI…YYSI, PIAK…TLIA, LIFV…SVPW, and AIFH…LTIV.

Belongs to the ATPase A chain family. In terms of assembly, F-type ATPases have 2 components, CF(1) - the catalytic core - and CF(0) - the membrane proton channel. CF(1) has five subunits: alpha(3), beta(3), gamma(1), delta(1), epsilon(1). CF(0) has three main subunits: a(1), b(2) and c(9-12). The alpha and beta chains form an alternating ring which encloses part of the gamma chain. CF(1) is attached to CF(0) by a central stalk formed by the gamma and epsilon chains, while a peripheral stalk is formed by the delta and b chains.

It localises to the cell inner membrane. In terms of biological role, key component of the proton channel; it plays a direct role in the translocation of protons across the membrane. This chain is ATP synthase subunit a, found in Psychrobacter sp. (strain PRwf-1).